Reading from the N-terminus, the 202-residue chain is Imidazole glycerol phosphate synthase subunit HisH 2 (202 aa).

The 202-residue stretch at 1–202 (MIVVIDYGVG…QLFKNFVELV (202 aa)) folds into the Glutamine amidotransferase type-1 domain. C80 serves as the catalytic Nucleophile. Catalysis depends on residues H183 and E185.

In terms of assembly, heterodimer of HisH and HisF.

Its subcellular location is the cytoplasm. The catalysed reaction is 5-[(5-phospho-1-deoxy-D-ribulos-1-ylimino)methylamino]-1-(5-phospho-beta-D-ribosyl)imidazole-4-carboxamide + L-glutamine = D-erythro-1-(imidazol-4-yl)glycerol 3-phosphate + 5-amino-1-(5-phospho-beta-D-ribosyl)imidazole-4-carboxamide + L-glutamate + H(+). It carries out the reaction L-glutamine + H2O = L-glutamate + NH4(+). It functions in the pathway amino-acid biosynthesis; L-histidine biosynthesis; L-histidine from 5-phospho-alpha-D-ribose 1-diphosphate: step 5/9. In terms of biological role, IGPS catalyzes the conversion of PRFAR and glutamine to IGP, AICAR and glutamate. The HisH subunit catalyzes the hydrolysis of glutamine to glutamate and ammonia as part of the synthesis of IGP and AICAR. The resulting ammonia molecule is channeled to the active site of HisF. In Pseudomonas aeruginosa (strain ATCC 15692 / DSM 22644 / CIP 104116 / JCM 14847 / LMG 12228 / 1C / PRS 101 / PAO1), this protein is Imidazole glycerol phosphate synthase subunit HisH 2 (hisH2).